We begin with the raw amino-acid sequence, 346 residues long: Dihydroorotase (346 aa).

Residues His14 and His16 each coordinate Zn(2+). Residues 16–18 (HLR) and Asn42 contribute to the substrate site. 3 residues coordinate Zn(2+): Lys100, His137, and His175. Lys100 carries the post-translational modification N6-carboxylysine. Residue His137 participates in substrate binding. A substrate-binding site is contributed by Leu220. Asp248 contacts Zn(2+). Asp248 is an active-site residue. Substrate-binding residues include His252 and Ala264.

This sequence belongs to the metallo-dependent hydrolases superfamily. DHOase family. Class II DHOase subfamily. As to quaternary structure, homodimer. It depends on Zn(2+) as a cofactor.

It carries out the reaction (S)-dihydroorotate + H2O = N-carbamoyl-L-aspartate + H(+). The protein operates within pyrimidine metabolism; UMP biosynthesis via de novo pathway; (S)-dihydroorotate from bicarbonate: step 3/3. Functionally, catalyzes the reversible cyclization of carbamoyl aspartate to dihydroorotate. This chain is Dihydroorotase, found in Novosphingobium aromaticivorans (strain ATCC 700278 / DSM 12444 / CCUG 56034 / CIP 105152 / NBRC 16084 / F199).